The following is a 39-amino-acid chain: Pro-opiomelanocortin (39 aa).

Residue Ser1 is modified to N-acetylserine. At Val13 the chain carries Valine amide. Ser31 carries the post-translational modification Phosphoserine.

This sequence belongs to the POMC family.

It localises to the secreted. In terms of biological role, precursor protein for pituitary hormones that regulate stress and environmental adaptation. Its function is as follows. Stimulates the adrenal glands to release cortisol. Functionally, anorexigenic peptide. Increases the pigmentation of skin by increasing melanin production in melanocytes. The sequence is that of Pro-opiomelanocortin (POMC) from Balaenoptera borealis (Sei whale).